Here is a 1218-residue protein sequence, read N- to C-terminus: MGESQSKQESNTRVAQHGSQQDVDPTFQTKRALERERSSPQVEQSFLGQLQSLLGWSSTSKDVPLSQLIREMDHESRRHSHQSKKKLDRSEHISEGTIPEIYEKRKETISHTQSMEQKYLFQNFTKLLLLQKCCPGGSEKLVRESWHPCVPEEGGHMIEIQDLFDPNLDTEKKPQLVIIEGAAGIGKSTLARQVKRAWDEGQLYRDRFQHVFFFSCRELAQCKQLSLAELIAQGQEVPTAPTRQILSRPEKLLFILDGIDEPAWVLEDQNPELCVHWSQAQPVHTLLGSLLGKSILPEASLMLTARTTALQKLVPSLGQPHRVEVLGFSEFERKDYFYKYFAKERNTIIDFNLIGSIPVLLTLCEVPWVCWLLCTCLEKQMQQGEVLSLTSQTTTALCLKYLSLTIPGQHLSTQLRTLCSLAAEGICQRRTLFSKSDLCKQGLAEDAIATFLKIGVLQRQPSSLSYSFAHLCLQEFFAAMSYILEDSEEAHGDMGNDRTVETLVERYGRQNLFEAPTVRFLLGLLNTREMREMENIFACKFPWETKLKLLRSIIGEPFCQPCHLGLFHCLYENQEEELLTETMLCFPLTASGPNHMEATVFQTNVKRLVIQTDMELMVVTFCITFSHVRSLRLKGKGQQEYKLTAPAMVLYRWTPISEASWKVLFSNLKCTRNLEELDLSGNPLSYSAVRSLCTALRQPGCRLKTLWLVDCGLTSRCCSFLASMLSAHSRLAELDLRLNDLGDNGVRQLCEGLRNPACNLSILRLDQASLSEQVITELRALETKNPKLFISSTWMSHMTMPTENTDGEESLTSSKQQQQQSGDKHMEPLGTDDDFWGPSGPVSTEVVDRERNLYRVRLPMAGSYHCPSTGLHFVVTRAVTIEIGFCAWSQFLHETPLQHSHMVAGPLFDIKAEHGAVTAVCLPHFVSLQEGKVDSSLFHVAHFQDHGMVLETPARVEPHFAVLENPSFSPMGVLLRMIPAVGHFIPITSITLIYYRLYLEDITFHLYLVPNDCTIRKAIDEEELKFQFVRINKPPPVDALYVGSRYIVSSSKEVEILPKELELCYRSPRESQLFSEIYVGNIGSGINLQLTDKKYMNLIWEALLKPGDLRPALPRMASAPKDAPALLHFVDQHREQLVARVTSVDPLLDKLHGLVLSEEDYETVRAEATNQDKMRKLFRGSRSWSWDCKDHFYQALKETHPHLIMDLLEKSGGVSVRL.

The segment covering 1–29 (MGESQSKQESNTRVAQHGSQQDVDPTFQT) has biased composition (polar residues). 2 disordered regions span residues 1–44 (MGES…QVEQ) and 71–91 (EMDH…DRSE). A compositionally biased stretch (basic residues) spans 77–87 (RRHSHQSKKKL). Residues 175 to 484 (QLVIIEGAAG…EFFAAMSYIL (310 aa)) enclose the NACHT domain. 181-188 (GAAGIGKS) serves as a coordination point for ATP. 3 LRR repeats span residues 343–364 (KERN…LTLC), 673–693 (NLEE…RSLC), and 730–750 (RLAE…RQLC). Polar residues predominate over residues 799 to 815 (TMPTENTDGEESLTSSK). Residues 799-842 (TMPTENTDGEESLTSSKQQQQQSGDKHMEPLGTDDDFWGPSGPV) are disordered. The segment at 835–968 (FWGPSGPVST…HFAVLENPSF (134 aa)) is ZU5. An FIIND domain is found at 835–1118 (FWGPSGPVST…LRPALPRMAS (284 aa)). The interval 969 to 1118 (SPMGVLLRMI…LRPALPRMAS (150 aa)) is UPA. In terms of domain architecture, CARD spans 1122-1211 (DAPALLHFVD…HLIMDLLEKS (90 aa)).

The protein belongs to the NLRP family. In terms of assembly, interacts (via LRR repeats) with BCL2 and BCL2L1 (via the loop between motifs BH4 and BH3). Interacts with NOD2; this interaction is enhanced in the presence of muramyl dipeptide (MDP) and increases IL1B release. Interacts with EIF2AK2/PKR; this interaction requires EIF2AK2 activity, is accompanied by EIF2AK2 autophosphorylation and promotes inflammasome assembly in response to danger-associated signals. Interacts with MEFV; this interaction targets Nlrp1a to degradation by autophagy, hence preventing excessive IL1B- and IL18-mediated inflammation. Interacts with DPP9; leading to inhibit activation of the inflammasome. DPP9 acts via formation of a ternary complex, composed of a DPP9 homodimer, one full-length NLRP1 protein, and one cleaved C-terminus of Nlrp1a (NACHT, LRR and PYD domains-containing protein 1a, C-terminus). Interacts with DPP8; leading to inhibit activation of the inflammasome, probably via formation of a ternary complex with DPP8. Interacts with the C-terminal part of Nlrp1a (NACHT, LRR and PYD domains-containing protein 1a, C-terminus) in absence of pathogens and other damage-associated signals. As to quaternary structure, interacts with the N-terminal part of Nlrp1a (NACHT, LRR and PYD domains-containing protein 1a, N-terminus) in absence of pathogens and other damage-associated signals. Homomultimer; forms the Nlrp1a inflammasome polymeric complex, a filament composed of homopolymers of this form in response to pathogens and other damage-associated signals. The Nlrp1a inflammasome polymeric complex directly recruits pro-caspase-1 (proCASP1) independently of PYCARD/ASC. Interacts (via CARD domain) with CASP1 (via CARD domain); leading to CASP1 activation. Autocatalytically cleaved. Autocatalytic cleavage in FIIND region occurs constitutively, prior to activation signals, and is required for inflammasome activity (IL1B release), possibly by facilitating CASP1 binding. Both N- and C-terminal parts remain associated non-covalently. In terms of processing, ubiquitinated in response to pathogen-associated signals, leading to its degradation by the proteasome and subsequent release of the cleaved C-terminal part of the protein (NACHT, LRR and PYD domains-containing protein 1a, C-terminus), which polymerizes and forms the Nlrp1a inflammasome.

It localises to the cytoplasm. The protein resides in the cytosol. The protein localises to the nucleus. Its subcellular location is the inflammasome. Its activity is regulated as follows. Activated by pathogens and other damage-associated signals: activation promotes ubiquitination and degradation of the N-terminal part, releasing the cleaved C-terminal part of the protein (NACHT, LRR and PYD domains-containing protein 1a, C-terminus), which polymerizes and forms the Nlrp1a inflammasome. Nlrp1a inflammasome is inhibited by DPP8 and DPP9, which sequester the C-terminal fragment of Nlrp1a (NACHT, LRR and PYD domains-containing protein 1a, C-terminus) in a ternary complex, thereby preventing Nlrp1a oligomerization and activation. Nlrp1a inflammasome is strongly activated by Val-boroPro (Talabostat, PT-100), an inhibitor of dipeptidyl peptidases DPP8 and DPP9. Val-boroPro relieves inhibition of DPP8 and/or DPP9 by promoting disruption of the ternary complex, releasing its C-terminal part from autoinhibition. Not activated by cleavage by B.anthracis lethal toxin (LT) endopeptidase. Functionally, acts as the sensor component of the Nlrp1a inflammasome, which mediates inflammasome activation in response to various pathogen-associated signals, leading to subsequent pyroptosis. Inflammasomes are supramolecular complexes that assemble in the cytosol in response to pathogens and other damage-associated signals and play critical roles in innate immunity and inflammation. Acts as a recognition receptor (PRR): recognizes specific pathogens and other damage-associated signals, such as Val-boroPro inhibitor, and mediates the formation of the inflammasome polymeric complex. In response to pathogen-associated signals, the N-terminal part of Nlrp1a is degraded by the proteasome, releasing the cleaved C-terminal part of the protein (NACHT, LRR and PYD domains-containing protein 1a, C-terminus), which polymerizes to initiate the formation of the inflammasome complex: the inflammasome directly recruits pro-caspase-1 (proCASP1) independently of PYCARD/ASC and promotes caspase-1 (CASP1) activation, which subsequently cleaves and activates inflammatory cytokines IL1B and IL18 and gasdermin-D (GSDMD), leading to pyroptosis. In the absence of GSDMD expression, the Nlrp1a inflammasome is able to recruit and activate CASP8, leading to activation of gasdermin-E (GSDME). In terms of biological role, constitutes the precursor of the Nlrp1a inflammasome, which mediates autoproteolytic processing within the FIIND domain to generate the N-terminal and C-terminal parts, which are associated non-covalently in absence of pathogens and other damage-associated signals. Its function is as follows. Regulatory part that prevents formation of the Nlrp1a inflammasome: in absence of pathogens and other damage-associated signals, interacts with the C-terminal part of Nlrp1a (NACHT, LRR and PYD domains-containing protein 1a, C-terminus), preventing activation of the Nlrp1a inflammasome. In response to pathogen-associated signals, this part is ubiquitinated by the N-end rule pathway and degraded by the proteasome, releasing the cleaved C-terminal part of the protein, which polymerizes and forms the Nlrp1a inflammasome. Constitutes the active part of the Nlrp1a inflammasome. In absence of pathogens and other damage-associated signals, interacts with the N-terminal part of Nlrp1a (NACHT, LRR and PYD domains-containing protein 1a, N-terminus), preventing activation of the Nlrp1a inflammasome. In response to pathogen-associated signals, the N-terminal part of Nlrp1a is degraded by the proteasome, releasing this form, which polymerizes to form the Nlrp1a inflammasome complex: the Nlrp1a inflammasome complex then directly recruits pro-caspase-1 (proCASP1) and promotes caspase-1 (CASP1) activation, leading to gasdermin-D (GSDMD) cleavage and subsequent pyroptosis. This is NACHT, LRR and PYD domains-containing protein 1a allele 4 from Rattus norvegicus (Rat).